We begin with the raw amino-acid sequence, 181 residues long: Probable pyruvoyl-dependent arginine decarboxylase (181 aa).

Residue serine 43 is modified to Pyruvic acid (Ser).

The protein belongs to the PdaD family. The cofactor is pyruvate.

The catalysed reaction is L-arginine + H(+) = agmatine + CO2. The polypeptide is Probable pyruvoyl-dependent arginine decarboxylase (Chlorobaculum tepidum (strain ATCC 49652 / DSM 12025 / NBRC 103806 / TLS) (Chlorobium tepidum)).